The following is a 66-amino-acid chain: Large ribosomal subunit protein bL35 (66 aa).

Belongs to the bacterial ribosomal protein bL35 family.

In Bradyrhizobium diazoefficiens (strain JCM 10833 / BCRC 13528 / IAM 13628 / NBRC 14792 / USDA 110), this protein is Large ribosomal subunit protein bL35.